The primary structure comprises 678 residues: Methionine--tRNA ligase (678 aa).

Positions 14–24 (PYANGSIHLGH) match the 'HIGH' region motif. C145, C148, C158, and C161 together coordinate Zn(2+). A 'KMSKS' region motif is present at residues 331–335 (KMSKS). K334 serves as a coordination point for ATP. The tRNA-binding domain maps to 576–678 (AFAAVDLRIA…SGAKPGQRVK (103 aa)).

This sequence belongs to the class-I aminoacyl-tRNA synthetase family. MetG type 1 subfamily. As to quaternary structure, homodimer. Zn(2+) serves as cofactor.

It localises to the cytoplasm. It carries out the reaction tRNA(Met) + L-methionine + ATP = L-methionyl-tRNA(Met) + AMP + diphosphate. Is required not only for elongation of protein synthesis but also for the initiation of all mRNA translation through initiator tRNA(fMet) aminoacylation. In Pseudomonas aeruginosa (strain UCBPP-PA14), this protein is Methionine--tRNA ligase.